We begin with the raw amino-acid sequence, 98 residues long: NADH-ubiquinone oxidoreductase chain 4L (98 aa).

Transmembrane regions (helical) follow at residues 1 to 21, 28 to 48, and 61 to 81; these read MEQI…GVLT, STLL…VLLI, and LILL…LVTI.

The protein belongs to the complex I subunit 4L family. Core subunit of respiratory chain NADH dehydrogenase (Complex I) which is composed of 45 different subunits.

The protein localises to the mitochondrion inner membrane. It carries out the reaction a ubiquinone + NADH + 5 H(+)(in) = a ubiquinol + NAD(+) + 4 H(+)(out). Functionally, core subunit of the mitochondrial membrane respiratory chain NADH dehydrogenase (Complex I) which catalyzes electron transfer from NADH through the respiratory chain, using ubiquinone as an electron acceptor. Part of the enzyme membrane arm which is embedded in the lipid bilayer and involved in proton translocation. This is NADH-ubiquinone oxidoreductase chain 4L (MT-ND4L) from Monodelphis domestica (Gray short-tailed opossum).